We begin with the raw amino-acid sequence, 566 residues long: Probable cytochrome P450 519D1 (566 aa).

Residues 1–21 (MNVFVLTFFICIIYLLFDLIK) traverse the membrane as a helical segment. Residues 471–491 (FNNNNNNNNNNNNNNSNNKHK) are disordered. Residues 472-487 (NNNNNNNNNNNNNNSN) show a composition bias toward low complexity. Cys510 contacts heme.

Belongs to the cytochrome P450 family. Requires heme as cofactor.

It localises to the membrane. In Dictyostelium discoideum (Social amoeba), this protein is Probable cytochrome P450 519D1 (cyp519D1).